The sequence spans 85 residues: Delta/kappa-theraphotoxin-Pm1a (85 aa).

The first 19 residues, 1–19 (MKTFVFIVLVALAFVLTAA), serve as a signal peptide directing secretion. The propeptide occupies 20-43 (KEERANPSELVSALAELVMLDAER). 3 cysteine pairs are disulfide-bonded: Cys50–Cys64, Cys57–Cys69, and Cys63–Cys77.

Belongs to the neurotoxin 10 (Hwtx-1) family. In terms of tissue distribution, expressed by the venom gland.

It localises to the secreted. In terms of biological role, multimodal toxin that enhances nociceptor excitability mainly by the simultaneous stimulation of repetitive firing (through Nav1.8/SCN10A channel current enhancement) and impairment of repolarization (by inhibiting delayed rectifier current of Kv2.1/KCNB1), with a potential contribution from tetrodotoxin-sensitive voltage-gated sodium channels (Nav) modified excitability. Enhances Nav1.8/SCN10A currents (EC(50)=1.1 uM), modifies the channel gating by a right-shift in steady-state inactivation and delays open-state inactivation. Also decreases Kv2.1/KCNB1 currents (IC(50)=0.43 uM) and causes a depolarizing shift in the voltage dependence of activation without change in steady-state inactivation. In addition, inhibits peak currents of human sodium channels (Nav1.1 to Nav1.7, IC(50)=0.38-2.3 uM) and delays fast inactivation of Nav1.1/SCN1A, Nav1.3/SCN3A, Nav1.6/SCN8A, and Nav1.7/SCN9A. In small dorsal root ganglion neurons, induces hyperexcitability by enhancing tetrodotoxin-resistant sodium currents, impairing repolarization and lowering the threshold of action potential firing, consistent with the severe pain associated with envenomation. In vivo, elicits nocifensive behavior in mice after intraplantar injection. The chain is Delta/kappa-theraphotoxin-Pm1a from Pelinobius muticus (King baboon spider).